The chain runs to 270 residues: Cbp/p300-interacting transactivator 2 (270 aa).

The segment at 138–201 (LHPAAGHQMN…SGGGSGSGNM (64 aa)) is disordered. Gly residues predominate over residues 165–198 (STPGGSGGSSTPGGSGSSSGGGAGSSNSGGGSGS).

It belongs to the CITED family. Interacts (via C-terminus) with SMAD2. Interacts (via C-terminus) with SMAD3 (via MH2 domain). Interacts with LHX2 (via LIM domains). Interacts with WT1. Interacts (via C-terminus) with EP300 (via CH1 domain); the interaction is stimulated in response to hypoxia. Interacts with PPARA. Interacts (via C-terminus) with TFAP2A, TFAP2B and TFAP2C.

It localises to the nucleus. Its function is as follows. Transcriptional coactivator of the p300/CBP-mediated transcription complex. Acts as a bridge, linking TFAP2 transcription factors and the p300/CBP transcriptional coactivator complex in order to stimulate TFAP2-mediated transcriptional activation. Positively regulates TGF-beta signaling through its association with the SMAD/p300/CBP-mediated transcriptional coactivator complex. Stimulates the peroxisome proliferator-activated receptors PPARA transcriptional activity. Enhances estrogen-dependent transactivation mediated by estrogen receptors. Also acts as a transcriptional corepressor; interferes with the binding of the transcription factors HIF1A or STAT2 and the p300/CBP transcriptional coactivator complex. Participates in sex determination and early gonad development by stimulating transcription activation of SRY. Plays a role in controlling left-right patterning during embryogenesis; potentiates transcriptional activation of NODAL-mediated gene transcription in the left lateral plate mesoderm (LPM). Plays an essential role in differentiation of the adrenal cortex from the adrenogonadal primordium (AGP); stimulates WT1-mediated transcription activation thereby up-regulating the nuclear hormone receptor NR5A1 promoter activity. Associates with chromatin to the PITX2 P1 promoter region. This chain is Cbp/p300-interacting transactivator 2 (CITED2), found in Homo sapiens (Human).